The sequence spans 327 residues: DNA-directed RNA polymerase subunit alpha (327 aa).

An alpha N-terminal domain (alpha-NTD) region spans residues 1–233 (MQNSASEFLK…DQLSIFADLQ (233 aa)). The alpha C-terminal domain (alpha-CTD) stretch occupies residues 247–327 (VDPILLRPVD…NWPPAGLEKP (81 aa)).

Belongs to the RNA polymerase alpha chain family. In terms of assembly, homodimer. The RNAP catalytic core consists of 2 alpha, 1 beta, 1 beta' and 1 omega subunit. When a sigma factor is associated with the core the holoenzyme is formed, which can initiate transcription.

The catalysed reaction is RNA(n) + a ribonucleoside 5'-triphosphate = RNA(n+1) + diphosphate. Functionally, DNA-dependent RNA polymerase catalyzes the transcription of DNA into RNA using the four ribonucleoside triphosphates as substrates. This is DNA-directed RNA polymerase subunit alpha from Laribacter hongkongensis (strain HLHK9).